The chain runs to 524 residues: Phosphoenolpyruvate carboxykinase (ATP) (524 aa).

Substrate contacts are provided by Arg-52, Tyr-188, and Lys-194. ATP contacts are provided by residues Lys-194, His-213, and 229 to 237; that span reads GLSGTGKTT. Residues Lys-194 and His-213 each coordinate Mn(2+). Residue Asp-250 coordinates Mn(2+). Residues Glu-278, Arg-314, and Thr-439 each coordinate ATP. Arg-314 contacts substrate.

This sequence belongs to the phosphoenolpyruvate carboxykinase (ATP) family. The cofactor is Mn(2+).

Its subcellular location is the cytoplasm. It catalyses the reaction oxaloacetate + ATP = phosphoenolpyruvate + ADP + CO2. It participates in carbohydrate biosynthesis; gluconeogenesis. In terms of biological role, involved in the gluconeogenesis. Catalyzes the conversion of oxaloacetate (OAA) to phosphoenolpyruvate (PEP) through direct phosphoryl transfer between the nucleoside triphosphate and OAA. The sequence is that of Phosphoenolpyruvate carboxykinase (ATP) from Campylobacter jejuni subsp. doylei (strain ATCC BAA-1458 / RM4099 / 269.97).